The sequence spans 283 residues: 4-diphosphocytidyl-2-C-methyl-D-erythritol kinase (283 aa).

Residue lysine 10 is part of the active site. 99 to 109 (PMGGGLGGGSS) is a binding site for ATP. Aspartate 141 is a catalytic residue.

It belongs to the GHMP kinase family. IspE subfamily. In terms of assembly, homodimer.

The enzyme catalyses 4-CDP-2-C-methyl-D-erythritol + ATP = 4-CDP-2-C-methyl-D-erythritol 2-phosphate + ADP + H(+). It functions in the pathway isoprenoid biosynthesis; isopentenyl diphosphate biosynthesis via DXP pathway; isopentenyl diphosphate from 1-deoxy-D-xylulose 5-phosphate: step 3/6. In terms of biological role, catalyzes the phosphorylation of the position 2 hydroxy group of 4-diphosphocytidyl-2C-methyl-D-erythritol. The chain is 4-diphosphocytidyl-2-C-methyl-D-erythritol kinase from Escherichia coli O9:H4 (strain HS).